A 374-amino-acid chain; its full sequence is Type IV pilus assembly protein PilC (374 aa).

The next 3 membrane-spanning stretches (helical) occupy residues 138 to 158, 187 to 207, and 347 to 367; these read AMTYPIAVIIVALIVSAILLI, EFLQEWWLAVIVGVGAIGFTF, and IMAVLGVLVGGLIVAMYLPIF.

This sequence belongs to the GSP F family. Homotetramer. Interacts with PilB.

It is found in the cell inner membrane. Its function is as follows. Essential inner membrane component of the type IV pilus (T4P) that plays a role in surface and host cell adhesion, colonization, biofilm maturation, virulence, and twitching, a form of surface-associated motility facilitated by cycles of extension, adhesion, and retraction of T4P fibers. Controls both pilus assembly and disassembly and plays an important role in PilB localization to the complex and ATPase activity. This Pseudomonas aeruginosa (strain ATCC 15692 / DSM 22644 / CIP 104116 / JCM 14847 / LMG 12228 / 1C / PRS 101 / PAO1) protein is Type IV pilus assembly protein PilC (pilC).